The chain runs to 836 residues: Mediator of RNA polymerase II transcription subunit 25 (836 aa).

Disordered regions lie at residues 260–285 (IPVT…PVSV), 435–466 (GSGA…VASN), 518–547 (VGQQ…PSSG), and 731–836 (QHQL…GFMG). Polar residues-rich tracts occupy residues 271-282 (SSANGPIQNRQP) and 442-466 (SAQT…VASN). Residues 680 to 761 (NQQQQQQQQL…QQHQLTQLQH (82 aa)) are a coiled coil. Composition is skewed to low complexity over residues 731–818 (QHQL…PGRS) and 827–836 (PNMPGAGFMG).

It belongs to the Mediator complex subunit 25 family. In terms of assembly, component of the Mediator complex. Interacts with the transcription factors BBX20, RAP2-2, ERF1B, ERF091, ERF095, ERF098, ERF109, HB29, PHL1, DREB2A, ABI5 and MYC2. Interacts with the E3 ubiquitin-protein ligases MBR1 and MBR2.

The protein resides in the nucleus. Component of the Mediator complex, a coactivator involved in the regulated transcription of nearly all RNA polymerase II-dependent genes. Mediator functions as a bridge to convey information from gene-specific regulatory proteins to the basal RNA polymerase II transcription machinery. Mediator is recruited to promoters by direct interactions with regulatory proteins and serves as a scaffold for the assembly of a functional preinitiation complex with RNA polymerase II and the general transcription factors. Positive regulator of shade avoidance and of jasmonate signaling. Acts in repression of PhyB-mediated light signaling and regulates the expression of FLOWERING LOCUS T (FT) and of CONSTANS (CO). This is Mediator of RNA polymerase II transcription subunit 25 (MED25) from Arabidopsis thaliana (Mouse-ear cress).